A 240-amino-acid polypeptide reads, in one-letter code: Ribonuclease PH (240 aa).

Phosphate contacts are provided by residues R87 and 125 to 127 (GTR).

Belongs to the RNase PH family. As to quaternary structure, homohexameric ring arranged as a trimer of dimers.

The enzyme catalyses tRNA(n+1) + phosphate = tRNA(n) + a ribonucleoside 5'-diphosphate. Phosphorolytic 3'-5' exoribonuclease that plays an important role in tRNA 3'-end maturation. Removes nucleotide residues following the 3'-CCA terminus of tRNAs; can also add nucleotides to the ends of RNA molecules by using nucleoside diphosphates as substrates, but this may not be physiologically important. Probably plays a role in initiation of 16S rRNA degradation (leading to ribosome degradation) during starvation. The sequence is that of Ribonuclease PH from Ruminiclostridium cellulolyticum (strain ATCC 35319 / DSM 5812 / JCM 6584 / H10) (Clostridium cellulolyticum).